Consider the following 616-residue polypeptide: Kelch-like protein 36 (616 aa).

A BTB domain is found at 46–113 (CDVVLVADEQ…LYGGELVLDG (68 aa)). One can recognise a BACK domain in the interval 148–250 (YLYLQELASI…PKNDLLHRVK (103 aa)). Kelch repeat units lie at residues 296 to 345 (CLLF…VLGG), 346 to 397 (FIFI…SIED), 398 to 444 (MLVA…IYKD), 446 to 493 (VYIS…SLGD), 494 to 546 (SIYS…VWEG), and 547 to 595 (RIYI…VCAL).

In terms of assembly, interacts with CUL3.

Its pathway is protein modification; protein ubiquitination. Functionally, probable substrate-specific adapter of an E3 ubiquitin-protein ligase complex which mediates the ubiquitination and subsequent proteasomal degradation of target proteins. The protein is Kelch-like protein 36 (KLHL36) of Bos taurus (Bovine).